The sequence spans 538 residues: Chaperonin GroEL (538 aa).

Residues 30–33, 87–91, glycine 415, 479–481, and aspartate 495 each bind ATP; these read TLGP, DGTTT, and DAA.

The protein belongs to the chaperonin (HSP60) family. Forms a cylinder of 14 subunits composed of two heptameric rings stacked back-to-back. Interacts with the co-chaperonin GroES.

Its subcellular location is the cytoplasm. It catalyses the reaction ATP + H2O + a folded polypeptide = ADP + phosphate + an unfolded polypeptide.. Together with its co-chaperonin GroES, plays an essential role in assisting protein folding. The GroEL-GroES system forms a nano-cage that allows encapsulation of the non-native substrate proteins and provides a physical environment optimized to promote and accelerate protein folding. This chain is Chaperonin GroEL, found in Dictyoglomus thermophilum (strain ATCC 35947 / DSM 3960 / H-6-12).